The primary structure comprises 162 residues: Ribosomal RNA large subunit methyltransferase H (162 aa).

Residues Leu78 and Gly110 each coordinate S-adenosyl-L-methionine.

It belongs to the RNA methyltransferase RlmH family. In terms of assembly, homodimer.

Its subcellular location is the cytoplasm. It catalyses the reaction pseudouridine(1915) in 23S rRNA + S-adenosyl-L-methionine = N(3)-methylpseudouridine(1915) in 23S rRNA + S-adenosyl-L-homocysteine + H(+). Its function is as follows. Specifically methylates the pseudouridine at position 1915 (m3Psi1915) in 23S rRNA. The polypeptide is Ribosomal RNA large subunit methyltransferase H (Bradyrhizobium sp. (strain ORS 278)).